Consider the following 76-residue polypeptide: U-scoloptoxin(15)-Ssd3b (76 aa).

The first 23 residues, 1-23 (MEKKIIFLCFLVALLTFPEFISS), serve as a signal peptide directing secretion.

Contains 2 disulfide bonds. As to expression, expressed by the venom gland.

Its subcellular location is the secreted. The polypeptide is U-scoloptoxin(15)-Ssd3b (Scolopendra dehaani (Thai centipede)).